The sequence spans 162 residues: UPF0114 protein PSEEN0819 (162 aa).

3 helical membrane passes run 15-35 (LLAPIYFGLSLGLLALALKFF), 53-73 (LVLVILSLIDMSLVGGLLVMV), and 136-156 (LMWYVIIHMTFVVSAFVMGYL).

It belongs to the UPF0114 family.

It is found in the cell membrane. The protein is UPF0114 protein PSEEN0819 of Pseudomonas entomophila (strain L48).